We begin with the raw amino-acid sequence, 235 residues long: DnaA regulatory inactivator Hda (235 aa).

It belongs to the DnaA family. HdA subfamily. In terms of assembly, the active form seems to be an ADP-bound monomer. Forms the RIDA complex (regulatory inactivation of DnaA) of ATP-DnaA, ADP-Hda and the DNA-loaded beta sliding clamp (dnaN).

Mediates the interaction of DNA replication initiator protein DnaA with DNA polymerase subunit beta sliding clamp (dnaN). Stimulates hydrolysis of ATP-DnaA to ADP-DnaA, rendering DnaA inactive for reinitiation, a process called regulatory inhibition of DnaA or RIDA. The protein is DnaA regulatory inactivator Hda of Yersinia pestis bv. Antiqua (strain Antiqua).